Consider the following 55-residue polypeptide: ATP synthase F(0) complex subunit 8 (55 aa).

A helical transmembrane segment spans residues 10–32 (FFTMLTTWLTFLLLIQPKLLSFI).

This sequence belongs to the ATPase protein 8 family. Component of the ATP synthase complex composed at least of ATP5F1A/subunit alpha, ATP5F1B/subunit beta, ATP5MC1/subunit c (homooctomer), MT-ATP6/subunit a, MT-ATP8/subunit 8, ATP5ME/subunit e, ATP5MF/subunit f, ATP5MG/subunit g, ATP5MK/subunit k, ATP5MJ/subunit j, ATP5F1C/subunit gamma, ATP5F1D/subunit delta, ATP5F1E/subunit epsilon, ATP5PF/subunit F6, ATP5PB/subunit b, ATP5PD/subunit d, ATP5PO/subunit OSCP. ATP synthase complex consists of a soluble F(1) head domain (subunits alpha(3) and beta(3)) - the catalytic core - and a membrane F(0) domain - the membrane proton channel (subunits c, a, 8, e, f, g, k and j). These two domains are linked by a central stalk (subunits gamma, delta, and epsilon) rotating inside the F1 region and a stationary peripheral stalk (subunits F6, b, d, and OSCP).

It is found in the mitochondrion membrane. Its function is as follows. Subunit 8, of the mitochondrial membrane ATP synthase complex (F(1)F(0) ATP synthase or Complex V) that produces ATP from ADP in the presence of a proton gradient across the membrane which is generated by electron transport complexes of the respiratory chain. ATP synthase complex consist of a soluble F(1) head domain - the catalytic core - and a membrane F(1) domain - the membrane proton channel. These two domains are linked by a central stalk rotating inside the F(1) region and a stationary peripheral stalk. During catalysis, ATP synthesis in the catalytic domain of F(1) is coupled via a rotary mechanism of the central stalk subunits to proton translocation. In vivo, can only synthesize ATP although its ATP hydrolase activity can be activated artificially in vitro. Part of the complex F(0) domain. This chain is ATP synthase F(0) complex subunit 8, found in Guira guira (Guira cuckoo).